Consider the following 251-residue polypeptide: tRNA (guanine-N(7)-)-methyltransferase (251 aa).

Positions 1 to 29 (MTQTLSSQDPQAPAAPPMPGAAGSAPADV) are disordered. S-adenosyl-L-methionine-binding residues include E84, E109, D136, and D159. Residue D159 is part of the active site. K163 provides a ligand contact to substrate. Positions 165–170 (RHNKRR) are interaction with RNA. Residues D195 and 230–233 (TKFE) each bind substrate.

The protein belongs to the class I-like SAM-binding methyltransferase superfamily. TrmB family.

The catalysed reaction is guanosine(46) in tRNA + S-adenosyl-L-methionine = N(7)-methylguanosine(46) in tRNA + S-adenosyl-L-homocysteine. It participates in tRNA modification; N(7)-methylguanine-tRNA biosynthesis. Catalyzes the formation of N(7)-methylguanine at position 46 (m7G46) in tRNA. This chain is tRNA (guanine-N(7)-)-methyltransferase, found in Acidovorax sp. (strain JS42).